Consider the following 1340-residue polypeptide: Iron-sulfur cluster assembly protein SufD (1340 aa).

Low complexity predominate over residues 477–487 (NSLKHNNNNTK). Disordered regions lie at residues 477–498 (NSLK…ERSS), 723–743 (HGKD…NYLN), 765–794 (NVST…QSTV), 835–865 (EKNE…GEKK), and 992–1055 (NIPT…NNIQ). Residues 723–734 (HGKDNTQHDDKN) are compositionally biased toward basic and acidic residues. Over residues 782 to 794 (NPDTETNNEQSTV) the composition is skewed to polar residues. Residues 1022-1037 (DNLLQNDQATNSNVEI) are compositionally biased toward polar residues.

This sequence belongs to the iron-sulfur cluster assembly SufBD family. Component of a complex composed of SufB, SufC and SufD in a stoichiometric ratio of 1:2:1. Interacts with SufB. Interacts with SufC; the interaction enhances the ATPase activity of SufC.

Its subcellular location is the plastid. It localises to the apicoplast. The protein operates within cofactor biosynthesis; iron-sulfur cluster biosynthesis. In terms of biological role, participates in the sulfur mobilization (SUF) pathway for iron-sulfur (Fe-S) cluster biogenesis. As part of a complex consisting of SufB-SufC(2)-SufD, involved in assembly of [4Fe-4S] clusters. Enhances the ATPase activity of SufC. This chain is Iron-sulfur cluster assembly protein SufD, found in Plasmodium berghei (strain Anka).